The primary structure comprises 476 residues: Probable cytosol aminopeptidase (476 aa).

Residues lysine 242 and aspartate 247 each coordinate Mn(2+). Lysine 254 is an active-site residue. Residues aspartate 265, aspartate 324, and glutamate 326 each contribute to the Mn(2+) site. The active site involves arginine 328.

Belongs to the peptidase M17 family. The cofactor is Mn(2+).

The protein localises to the cytoplasm. The catalysed reaction is Release of an N-terminal amino acid, Xaa-|-Yaa-, in which Xaa is preferably Leu, but may be other amino acids including Pro although not Arg or Lys, and Yaa may be Pro. Amino acid amides and methyl esters are also readily hydrolyzed, but rates on arylamides are exceedingly low.. It carries out the reaction Release of an N-terminal amino acid, preferentially leucine, but not glutamic or aspartic acids.. Functionally, presumably involved in the processing and regular turnover of intracellular proteins. Catalyzes the removal of unsubstituted N-terminal amino acids from various peptides. The polypeptide is Probable cytosol aminopeptidase (Treponema denticola (strain ATCC 35405 / DSM 14222 / CIP 103919 / JCM 8153 / KCTC 15104)).